Reading from the N-terminus, the 402-residue chain is MIVVEKVDKIPTAKRLVEIVERKGQGHPDYIADGISEWVSRYLSRYYLEHFGVILHHNVDKTLVVGGQAAPKFGGGEVIQPIYIIVSGRATSEVKTKDGTVKIPLGTIVIQAARDWLKSHFRFLDPDVHTIIDYRIGQGSADLVGIYDLGVRGVPLANDTSVGVGYAPLTPLEELVYKTERLLNSRDFKSKYPEVGEDVKVMGVRVGKEVKLTVACAMISRLVKDKSHYISVKEDVKRAIEDLAAKIMPDYNVEVTVNAADKPEYDIFYLTVTGTSAEHGDDGMTGRGNKANGLITPMRSMSLEAAAGKNPVSHVGKIYNVVAQRIADRIYKEVKDVVEVYVEVVSQIGKPINEPKILNVEILSSGELTGELRREAEAIAKEEMDRITQVTELILRGEVSLY.

Residue 137-142 participates in ATP binding; sequence GQGSAD.

It belongs to the AdoMet synthase 2 family. Mg(2+) serves as cofactor.

The enzyme catalyses L-methionine + ATP + H2O = S-adenosyl-L-methionine + phosphate + diphosphate. Its pathway is amino-acid biosynthesis; S-adenosyl-L-methionine biosynthesis; S-adenosyl-L-methionine from L-methionine: step 1/1. In terms of biological role, catalyzes the formation of S-adenosylmethionine from methionine and ATP. The polypeptide is S-adenosylmethionine synthase (Pyrobaculum calidifontis (strain DSM 21063 / JCM 11548 / VA1)).